Consider the following 155-residue polypeptide: Ribosome maturation factor RimP (155 aa).

It belongs to the RimP family.

The protein resides in the cytoplasm. Required for maturation of 30S ribosomal subunits. The polypeptide is Ribosome maturation factor RimP (Listeria monocytogenes serovar 1/2a (strain ATCC BAA-679 / EGD-e)).